The following is a 263-amino-acid chain: Indole-3-glycerol phosphate synthase (263 aa).

It belongs to the TrpC family.

It catalyses the reaction 1-(2-carboxyphenylamino)-1-deoxy-D-ribulose 5-phosphate + H(+) = (1S,2R)-1-C-(indol-3-yl)glycerol 3-phosphate + CO2 + H2O. The protein operates within amino-acid biosynthesis; L-tryptophan biosynthesis; L-tryptophan from chorismate: step 4/5. The protein is Indole-3-glycerol phosphate synthase of Aliarcobacter butzleri (strain RM4018) (Arcobacter butzleri).